A 366-amino-acid polypeptide reads, in one-letter code: Galactose-1-phosphate uridylyltransferase (366 aa).

Serine 27 is modified (phosphoserine). Residues cysteine 54 and cysteine 57 each contribute to the Zn(2+) site. Residues alanine 63 and 79-80 (ND) contribute to the UDP-alpha-D-glucose site. Histidine 124 lines the Zn(2+) pocket. Asparagine 169 contributes to the UDP-alpha-D-glucose binding site. Histidine 180 is a binding site for Zn(2+). Histidine 182 serves as the catalytic Tele-UMP-histidine intermediate. Glutamine 184 is a UDP-alpha-D-glucose binding site. Glutamate 198, histidine 297, histidine 314, and histidine 316 together coordinate Fe cation. Residues 329–332 (KFLV) and 334–335 (FE) contribute to the UDP-alpha-D-glucose site.

Belongs to the galactose-1-phosphate uridylyltransferase type 1 family. As to quaternary structure, homodimer. Zn(2+) is required as a cofactor.

The enzyme catalyses alpha-D-galactose 1-phosphate + UDP-alpha-D-glucose = alpha-D-glucose 1-phosphate + UDP-alpha-D-galactose. It functions in the pathway carbohydrate metabolism; galactose metabolism. This chain is Galactose-1-phosphate uridylyltransferase (GAL7), found in Saccharomyces cerevisiae (strain ATCC 204508 / S288c) (Baker's yeast).